The primary structure comprises 214 residues: Large ribosomal subunit protein bL25 (214 aa).

A disordered region spans residues 178–214; the sequence is VEPEEEELPETDEEGEGAEGEAAEAAEGESAEGESEE. Acidic residues predominate over residues 179-214; it reads EPEEEELPETDEEGEGAEGEAAEAAEGESAEGESEE.

Belongs to the bacterial ribosomal protein bL25 family. CTC subfamily. Part of the 50S ribosomal subunit; part of the 5S rRNA/L5/L18/L25 subcomplex. Contacts the 5S rRNA. Binds to the 5S rRNA independently of L5 and L18.

Functionally, this is one of the proteins that binds to the 5S RNA in the ribosome where it forms part of the central protuberance. This Corynebacterium jeikeium (strain K411) protein is Large ribosomal subunit protein bL25.